The following is a 356-amino-acid chain: MLPKNFLEKIQDIEQKYAQTEEKLASLDITKDADTYKALSKDLKELSYIHELYKDYNKILKDIEDTKELLKDKDLRELAEKELENLNTKLLQKEKELINVLTPKDANDSKNVILEIRAGAGGEEAALFAADLLRMYQRYAERKGWKFNILEANKTGLGGYKEVIVSIEGKNVYSHLKYESGVHRVQRVPITESGGRIHTSTITVAVLPEADETDVVINPQDLRIETFRASGAGGQYVNTTESAVRITHIPTGISISCQDERSQLQNKLKAMRILYARLKDFYEKQKKEETDKERKEQVGTGERSEKIRTYNFSQNRVTDHRINLTLHKLQDVLDGDLDDIISSLQAKELEEKLASA.

Gln-235 carries the N5-methylglutamine modification.

It belongs to the prokaryotic/mitochondrial release factor family. In terms of processing, methylated by PrmC. Methylation increases the termination efficiency of RF1.

Its subcellular location is the cytoplasm. Its function is as follows. Peptide chain release factor 1 directs the termination of translation in response to the peptide chain termination codons UAG and UAA. The chain is Peptide chain release factor 1 from Hydrogenobaculum sp. (strain Y04AAS1).